A 263-amino-acid chain; its full sequence is 7beta-hydroxysteroid dehydrogenase (263 aa).

Residues 17 to 21 (TEGVG), 40 to 41 (RR), and 66 to 67 (DF) contribute to the NADP(+) site. Catalysis depends on Tyr-156, which acts as the Proton acceptor. Ser-240 is an NADP(+) binding site.

The protein belongs to the short-chain dehydrogenases/reductases (SDR) family. As to quaternary structure, homodimer.

The enzyme catalyses a 7beta-hydroxysteroid + NADP(+) = a 7-oxosteroid + NADPH + H(+). The catalysed reaction is 7-oxolithocholate + NADPH + H(+) = ursodeoxycholate + NADP(+). It catalyses the reaction 7beta-hydroxy-3,12-dioxo-5beta-cholan-24-oate + NADP(+) = dehydrocholate + NADPH + H(+). It carries out the reaction ursocholate + NADP(+) = 3alpha,12alpha-dihydroxy-7-oxo-5beta-cholanate + NADPH + H(+). 7beta-hydroxysteroid dehydrogenase that catalyzes the reduction of the 7-oxo group of 7-oxo-lithocholate (7-oxo-LCA), to yield ursodeoxycholate (UDCA). As C.aerofaciens is an intestinal bacterium, this enzyme probably contributes to the formation of UDCA in the human colon. UDCA is regarded as a chemopreventive beneficial secondary bile acid due to its low hydrophobicity; it protects hepatocytes and bile duct epithelial cells against necrosis and apoptosis induced by more hydrophobic secondary bile acids like deoxycholate (DCA). This enzyme is also able to catalyze the reverse reaction, i.e. the oxidation of the 7beta-hydroxy group of UDCA to 7-oxo-LCA. To a lesser extent, is also active on the taurine- and glycine-conjugates of ursodeoxycholate. It is specific for NADPH/NADP(+) as the electron acceptor/donor since it is not active with NADH/NAD(+). In the presence of NADPH, 7beta-HSDH can also reduce dehydrocholate. And is also able to oxidize ursocholate. This chain is 7beta-hydroxysteroid dehydrogenase, found in Collinsella aerofaciens (strain ATCC 25986 / DSM 3979 / JCM 10188 / KCTC 3647 / NCTC 11838 / VPI 1003).